Here is a 203-residue protein sequence, read N- to C-terminus: Reticulon-like protein B12 (203 aa).

Residues 24–203 enclose the Reticulon domain; sequence VADVMLWRKK…WANPENKKLS (180 aa). A run of 3 helical transmembrane segments spans residues 34–54, 55–75, and 132–152; these read NVSV…EAFA, YTIF…LFLW, and VAVS…QTLC.

It is found in the endoplasmic reticulum membrane. In Arabidopsis thaliana (Mouse-ear cress), this protein is Reticulon-like protein B12 (RTNLB12).